The following is a 101-amino-acid chain: NAD(P)H-quinone oxidoreductase subunit 4L, chloroplastic (101 aa).

A run of 3 helical transmembrane segments spans residues 2–22, 32–52, and 61–81; these read MLEH…YGLI, MCLE…SDFF, and IFSI…PAIV.

Belongs to the complex I subunit 4L family. In terms of assembly, NDH is composed of at least 16 different subunits, 5 of which are encoded in the nucleus.

It localises to the plastid. It is found in the chloroplast thylakoid membrane. It carries out the reaction a plastoquinone + NADH + (n+1) H(+)(in) = a plastoquinol + NAD(+) + n H(+)(out). The enzyme catalyses a plastoquinone + NADPH + (n+1) H(+)(in) = a plastoquinol + NADP(+) + n H(+)(out). NDH shuttles electrons from NAD(P)H:plastoquinone, via FMN and iron-sulfur (Fe-S) centers, to quinones in the photosynthetic chain and possibly in a chloroplast respiratory chain. The immediate electron acceptor for the enzyme in this species is believed to be plastoquinone. Couples the redox reaction to proton translocation, and thus conserves the redox energy in a proton gradient. This is NAD(P)H-quinone oxidoreductase subunit 4L, chloroplastic from Lotus japonicus (Lotus corniculatus var. japonicus).